Consider the following 400-residue polypeptide: MTTIGTPLSPRATKVMLLGSGELGREVLIALQRLGVETIAVDRYDNAPGQQVAHHARTIAMTDPDQLRALIEAERPDLVVPEIEAIATPALEALEAEGVTTVIPTARAARLTMDREGIRRLAAETLGLPTSPYRFCDSLEELTAAIEGGIGYPCVVKPVMSSSGKGQSKIDGPEGVAAAWEYAMSGSRVSNTRIIVEGFVDFDYEITLLTVRARGADGEIETRFCEPIGHRQVSGDYVESWQPHPMPGTALERARQIAGAVTRDLGGQGIFGVELFVKGDQVWFSEVSPRPHDTGMVTMVTQWQNEFELHARAILGLPVDTTLKSPGASAVIYGGVDAEGVVFDGVDLALRVPHTDIRLFGKPESFVNRRMGVALAFADDVDTARRNAAEAAGRVTPRAV.

N(1)-(5-phospho-beta-D-ribosyl)glycinamide is bound by residues 22–23 (EL) and Glu82. ATP contacts are provided by residues Arg115, Lys157, 162-167 (SSGKGQ), 197-200 (EGFV), and Glu205. The ATP-grasp domain maps to 120–315 (RLAAETLGLP…EFELHARAIL (196 aa)). Glu274 and Glu286 together coordinate Mg(2+). Residues Asp293, Lys362, and 369–370 (RR) contribute to the N(1)-(5-phospho-beta-D-ribosyl)glycinamide site.

It belongs to the PurK/PurT family. As to quaternary structure, homodimer.

The catalysed reaction is N(1)-(5-phospho-beta-D-ribosyl)glycinamide + formate + ATP = N(2)-formyl-N(1)-(5-phospho-beta-D-ribosyl)glycinamide + ADP + phosphate + H(+). It functions in the pathway purine metabolism; IMP biosynthesis via de novo pathway; N(2)-formyl-N(1)-(5-phospho-D-ribosyl)glycinamide from N(1)-(5-phospho-D-ribosyl)glycinamide (formate route): step 1/1. In terms of biological role, involved in the de novo purine biosynthesis. Catalyzes the transfer of formate to 5-phospho-ribosyl-glycinamide (GAR), producing 5-phospho-ribosyl-N-formylglycinamide (FGAR). Formate is provided by PurU via hydrolysis of 10-formyl-tetrahydrofolate. In Mycolicibacterium vanbaalenii (strain DSM 7251 / JCM 13017 / BCRC 16820 / KCTC 9966 / NRRL B-24157 / PYR-1) (Mycobacterium vanbaalenii), this protein is Formate-dependent phosphoribosylglycinamide formyltransferase.